An 81-amino-acid polypeptide reads, in one-letter code: U1-sicaritoxin-Li1c (81 aa).

A propeptide spanning residues 1–16 (ARGDAEKWESLISEER) is cleaved from the precursor. 4 disulfides stabilise this stretch: cysteine 18-cysteine 35, cysteine 26-cysteine 40, cysteine 34-cysteine 53, and cysteine 42-cysteine 51. Position 62 is an arginine amide (arginine 62). Residues 66 to 81 (ALMLDPETHRLLFSED) constitute a propeptide that is removed on maturation.

Belongs to the neurotoxin 28 (Litx) family. As to expression, expressed by the venom gland.

It is found in the secreted. Toxin active against insects (S.frugiperda larvae). May act on sodium (Nav) or calcium (Cav) channels. The chain is U1-sicaritoxin-Li1c from Loxosceles intermedia (Brown spider).